We begin with the raw amino-acid sequence, 476 residues long: Sulfate adenylyltransferase subunit 1 (476 aa).

The tr-type G domain maps to 24-243; that stretch reads KSLLRFLTCG…VDVEKEKEAG (220 aa). The interval 33 to 40 is G1; that stretch reads GSVDDGKS. 33-40 serves as a coordination point for GTP; that stretch reads GSVDDGKS. The G2 stretch occupies residues 91 to 95; that stretch reads GITID. The segment at 112–115 is G3; that stretch reads DTPG. GTP contacts are provided by residues 112–116 and 167–170; these read DTPGH and NKMD. The G4 stretch occupies residues 167–170; that stretch reads NKMD. A G5 region spans residues 205 to 207; that stretch reads SAL.

This sequence belongs to the TRAFAC class translation factor GTPase superfamily. Classic translation factor GTPase family. CysN/NodQ subfamily. As to quaternary structure, heterodimer composed of CysD, the smaller subunit, and CysN.

The catalysed reaction is sulfate + ATP + H(+) = adenosine 5'-phosphosulfate + diphosphate. The protein operates within sulfur metabolism; hydrogen sulfide biosynthesis; sulfite from sulfate: step 1/3. Its function is as follows. With CysD forms the ATP sulfurylase (ATPS) that catalyzes the adenylation of sulfate producing adenosine 5'-phosphosulfate (APS) and diphosphate, the first enzymatic step in sulfur assimilation pathway. APS synthesis involves the formation of a high-energy phosphoric-sulfuric acid anhydride bond driven by GTP hydrolysis by CysN coupled to ATP hydrolysis by CysD. This Vibrio vulnificus (strain YJ016) protein is Sulfate adenylyltransferase subunit 1.